A 387-amino-acid chain; its full sequence is Zinc transporter 7 (387 aa).

The Cytoplasmic portion of the chain corresponds to 1-37; that stretch reads MLPLSIKDDEYKPAKFNLVVKLSGWFRSILADKTSRN. A helical transmembrane segment spans residues 38–58; it reads LFFFLCLNLSFAFVELLYGIW. The Lumenal segment spans residues 59-67; the sequence is SNSLGLISD. A helical membrane pass occupies residues 68–88; that stretch reads SFHMFFDCTALLAGLAASVIS. The Cytoplasmic portion of the chain corresponds to 89–102; sequence RWRSNDSFSYGYVR. Residues 103–123 traverse the membrane as a helical segment; sequence AEVLAGFVNGLFLIFTAFFIF. Residues 124 to 140 are Lumenal-facing; it reads SEGVERALEPPDVHHDR. A helical membrane pass occupies residues 141-161; sequence LLPVSIAGLLVNLVGIFVFQH. Residues 161-232 are his-rich loop; sequence HGGHGHSHGG…HDDQHCHDDH (72 aa). The Cytoplasmic portion of the chain corresponds to 162 to 247; it reads GGHGHSHGGD…KGSSKQILQG (86 aa). The interval 167–237 is disordered; that stretch reads SHGGDDHGHS…CHDDHTLTPG (71 aa). Positions 187-201 are enriched in basic residues; it reads GHSHGGHGHSHGGHG. 2 stretches are compositionally biased toward basic and acidic residues: residues 202–214 and 221–233; these read HSHE…DHGH and HSHD…DDHT. Residues 248 to 268 form a helical membrane-spanning segment; that stretch reads VFLHIVADTLGSVGVIISAIL. Topologically, residues 269 to 273 are lumenal; it reads MQKYD. A helical membrane pass occupies residues 274–294; sequence LMIADPICSMLIALLIGVSVV. At 295-387 the chain is on the cytoplasmic side; sequence PLLRESIGIL…LYVQIEVAAM (93 aa).

Belongs to the cation diffusion facilitator (CDF) transporter (TC 2.A.4) family. SLC30A subfamily. In terms of assembly, homooligomer.

It localises to the golgi apparatus membrane. The protein resides in the cytoplasmic vesicle. The protein localises to the golgi apparatus. It is found in the trans-Golgi network. Its subcellular location is the sarcoplasmic reticulum. It localises to the mitochondrion. The enzyme catalyses Zn(2+)(in) = Zn(2+)(out). Its function is as follows. Zinc ion transporter mediating zinc entry from the cytosol into the lumen of organelles along the secretory pathway. By contributing to zinc ion homeostasis within the early secretory pathway, regulates the activation and folding of enzymes like alkaline phosphatases. The chain is Zinc transporter 7 (slc30a7) from Danio rerio (Zebrafish).